The chain runs to 138 residues: ER-derived vesicles protein ERV14 (138 aa).

The Cytoplasmic segment spans residues Gly2–Phe6. Residues Ile7–Tyr27 form a helical membrane-spanning segment. The Extracellular segment spans residues Ala28–Ala52. The chain crosses the membrane as a helical span at residues Ala53–Leu73. The Cytoplasmic segment spans residues Asn74–Lys111. A helical transmembrane segment spans residues Leu112–Ala132. The Extracellular portion of the chain corresponds to Glu133–Phe138.

Belongs to the cornichon family.

Its subcellular location is the endoplasmic reticulum membrane. It localises to the golgi apparatus membrane. Its function is as follows. Could regulate export of the bud site and axial growth sites selection protein AXL2 and possibly other secretory proteins from the endoplasmic reticulum in COPII-coated vesicles. Seems to be required for axial budding pattern in haploid cells. The protein is ER-derived vesicles protein ERV14 (ERV14) of Saccharomyces cerevisiae (strain ATCC 204508 / S288c) (Baker's yeast).